The chain runs to 441 residues: D-aminoacyl-tRNA deacylase (441 aa).

Belongs to the DtdA deacylase family. As to quaternary structure, monomer. Zn(2+) is required as a cofactor.

It carries out the reaction a D-aminoacyl-tRNA + H2O = a tRNA + a D-alpha-amino acid + H(+). The catalysed reaction is glycyl-tRNA(Ala) + H2O = tRNA(Ala) + glycine + H(+). Functionally, D-aminoacyl-tRNA deacylase with broad substrate specificity. By recycling D-aminoacyl-tRNA to D-amino acids and free tRNA molecules, this enzyme counteracts the toxicity associated with the formation of D-aminoacyl-tRNA entities in vivo. The protein is D-aminoacyl-tRNA deacylase of Natronomonas pharaonis (strain ATCC 35678 / DSM 2160 / CIP 103997 / JCM 8858 / NBRC 14720 / NCIMB 2260 / Gabara) (Halobacterium pharaonis).